We begin with the raw amino-acid sequence, 367 residues long: tRNA-specific 2-thiouridylase MnmA (367 aa).

Residues A14–S21 and L40 contribute to the ATP site. Catalysis depends on C108, which acts as the Nucleophile. C108 and C204 are joined by a disulfide. Residue G132 participates in ATP binding. An interaction with tRNA region spans residues K154 to Q156. The active-site Cysteine persulfide intermediate is the C204.

This sequence belongs to the MnmA/TRMU family.

Its subcellular location is the cytoplasm. It catalyses the reaction S-sulfanyl-L-cysteinyl-[protein] + uridine(34) in tRNA + AH2 + ATP = 2-thiouridine(34) in tRNA + L-cysteinyl-[protein] + A + AMP + diphosphate + H(+). Its function is as follows. Catalyzes the 2-thiolation of uridine at the wobble position (U34) of tRNA, leading to the formation of s(2)U34. This chain is tRNA-specific 2-thiouridylase MnmA, found in Rickettsia bellii (strain OSU 85-389).